Reading from the N-terminus, the 668-residue chain is uncharacterized protein (668 aa).

A run of 9 helical transmembrane segments spans residues 182-202, 208-228, 286-306, 321-341, 379-399, 430-450, 499-519, 557-577, and 587-607; these read FAFA…GILG, PYSY…IQFW, VPLF…AFIV, IVSL…TFIY, ALFL…PHYI, IYFL…VPQL, FVLM…APIF, LSLL…FYSS, and VIAA…RMFI.

The protein resides in the membrane. This is an uncharacterized protein from Schizosaccharomyces pombe (strain 972 / ATCC 24843) (Fission yeast).